The sequence spans 185 residues: Homeobox protein TGIF2LY (185 aa).

Disordered regions lie at residues 1 to 58 and 166 to 185; these read MEAA…GNLP and RCQE…SSPE. The span at 21 to 39 shows a compositional bias: polar residues; it reads AKTQSPAQDTSIMSRNNAD. The segment at residues 48 to 111 is a DNA-binding region (homeobox; TALE-type); sequence EHKKKRKGNL…INARRRILPD (64 aa).

This sequence belongs to the TALE/TGIF homeobox family. Specifically expressed in adult testis.

The protein localises to the nucleus. In terms of biological role, may have a transcription role in testis. May act as a competitor/regulator of TGIF2LX. The polypeptide is Homeobox protein TGIF2LY (TGIF2LY) (Homo sapiens (Human)).